The following is a 498-amino-acid chain: Polygalacturonan/rhamnogalacturonan-binding protein YtcQ (498 aa).

Positions 1-22 (MGNKWRVLLIVLVLALGGVLAG) are cleaved as a signal peptide. C23 carries N-palmitoyl cysteine lipidation. C23 carries S-diacylglycerol cysteine lipidation.

Belongs to the bacterial solute-binding protein 1 family. The complex is probably composed of two ATP-binding proteins (MsmX), two transmembrane proteins (YtcP and YteP) and a solute-binding protein (YtcQ).

Its subcellular location is the cell membrane. Its function is as follows. Involved in pectin degradation. Part of the ABC transporter complex YtcQP-YteP involved in the uptake of polygalacturonan and rhamnogalacturonan type I. This chain is Polygalacturonan/rhamnogalacturonan-binding protein YtcQ (ytcQ), found in Bacillus subtilis (strain 168).